Reading from the N-terminus, the 285-residue chain is Methyl-CpG-binding domain protein 3 (285 aa).

An MBD domain is found at 1 to 69 (MERKRWECPA…STFDFRTGKM (69 aa)). Residue Ser56 is modified to Phosphoserine. Lys73 participates in a covalent cross-link: Glycyl lysine isopeptide (Lys-Gly) (interchain with G-Cter in SUMO2). Residue Ser85 is modified to Phosphoserine. Glycyl lysine isopeptide (Lys-Gly) (interchain with G-Cter in SUMO2) cross-links involve residues Lys90 and Lys92. Ser144 carries the phosphoserine modification. Residues 221–279 (TDDDIRKQEELVQQVRKRLEEALMADMLAHVEELARDGEAPLDKACAEEEEEEEEEEEE) adopt a coiled-coil conformation. Basic and acidic residues predominate over residues 255-267 (ARDGEAPLDKACA). A disordered region spans residues 255-285 (ARDGEAPLDKACAEEEEEEEEEEEEPEPERV). Over residues 268–285 (EEEEEEEEEEEEPEPERV) the composition is skewed to acidic residues.

In terms of assembly, heterodimer (via N-terminus) with MBD2. Component of the MeCP1 histone deacetylase complex. Component of the nucleosome remodeling and deacetylase (NuRD) repressor complex, composed of core proteins MTA1, MTA2, MTA3, RBBP4, RBBP7, HDAC1, HDAC2, MBD2, MBD3, and peripherally associated proteins CDK2AP1, CDK2AP2, GATAD2A, GATAD2B, CHD3, CHD4 and CHD5. The exact stoichiometry of the NuRD complex is unknown, and some subunits such as MBD2 and MBD3, GATAD2A and GATAD2B, and CHD3, CHD4 and CHD5 define mutually exclusive NuRD complexes. Interacts with MBD3L2 (via N-terminus); the interaction is direct. Interacts with BCL6. Interacts with CDK2AP1. Interacts with HDAC1. Interacts with MTA2. Interacts with DNMT1. Interacts with GATAD2A. Interacts with GATAD2B. Does not interact with PWWP2A. Does not interact with PWWP2B. Highly expressed in brain, heart, kidney, liver, lung, skeletal muscle, spleen and testis. Detected at lower levels in embryonic stem cells.

The protein resides in the nucleus. It is found in the chromosome. Functionally, acts as a component of the histone deacetylase NuRD complex which participates in the remodeling of chromatin. Acts as transcriptional repressor and plays a role in gene silencing. Does not bind methylated DNA by itself. Binds to a lesser degree DNA containing unmethylated CpG dinucleotides. Recruits histone deacetylases and DNA methyltransferases. The polypeptide is Methyl-CpG-binding domain protein 3 (Mbd3) (Mus musculus (Mouse)).